A 108-amino-acid polypeptide reads, in one-letter code: Insulin (108 aa).

The signal sequence occupies residues 1-21; the sequence is MAVWIQAGALLFLLAVSSVNA. Disulfide bonds link C30/C94, C42/C107, and C93/C98. The propeptide at 54 to 85 is c peptide; that stretch reads DVDPPLGFLPPKSAQETEVADFAFKDHAEVIR.

It belongs to the insulin family. Heterodimer of a B chain and an A chain linked by two disulfide bonds.

Its subcellular location is the secreted. Functionally, insulin decreases blood glucose concentration. It increases cell permeability to monosaccharides, amino acids and fatty acids. It accelerates glycolysis, the pentose phosphate cycle, and glycogen synthesis in liver. In Cyprinus carpio (Common carp), this protein is Insulin (ins).